The sequence spans 519 residues: MVRFAWRRRASLRATSSLSLRWRVMLLAMSMVAMVVVLMAFAVYVVISAALYSDIDNQLQSRAQLLIASGSLAADPGKAIEGTAYSDVNAMLVNPGHSIYTANQPGQTLPVGTAEKAVIRGELFMSQRTASDQRILAIHLPNDSSLLISKSLRPTEAVMTKLRWVLLIVGSLGVAVAAVAGGMVTRAGLRPVGRLTEAAERVARTDDLRPIPVFGSDELARLTEAFNLMLRALAESRERQARLVTDAGHELRTPLTSLRTNVELLIASMAPEAPRLPDQEMADLRADVLAQIEELSTLVGDLVDLTRDDAGQVVHEPIDMSEVLYRSLERVRRRRNDIHFDVQAIGWQIYGDAAGLSRAVLNLMDNAAKWSPSGGRVVVTMRQFDPSHVELVVSDYGPGIPPQERRLVFERFYRSTTARSLPGSGLGLAIVKQVVINHGGLLRVEDTAPGVQPPGTSIYVLLPGRPMPVSAYSTLADQDMGEANFQDKIGPAVQVSGKSANFRDSAHVISVDYQSARAR.

The Cytoplasmic portion of the chain corresponds to 1 to 26 (MVRFAWRRRASLRATSSLSLRWRVML). Residues 27–47 (LAMSMVAMVVVLMAFAVYVVI) form a helical membrane-spanning segment. Residues 48 to 163 (SAALYSDIDN…PTEAVMTKLR (116 aa)) lie on the Extracellular side of the membrane. Residues 164 to 184 (WVLLIVGSLGVAVAAVAGGMV) traverse the membrane as a helical segment. The Cytoplasmic portion of the chain corresponds to 185–519 (TRAGLRPVGR…SVDYQSARAR (335 aa)). Residues 186-238 (RAGLRPVGRLTEAAERVARTDDLRPIPVFGSDELARLTEAFNLMLRALAESRE) form the HAMP domain. The Histidine kinase domain maps to 246-466 (DAGHELRTPL…SIYVLLPGRP (221 aa)). His-249 carries the post-translational modification Phosphohistidine; by autocatalysis.

Mg(2+) serves as cofactor. It depends on Mn(2+) as a cofactor. Autophosphorylated.

It localises to the cell membrane. The catalysed reaction is ATP + protein L-histidine = ADP + protein N-phospho-L-histidine.. In terms of biological role, member of the two-component regulatory system MprB/MprA which contributes to maintaining a balance among several systems involved in stress resistance and is required for establishment and maintenance of persistent infection in the host. In response to environmental signals MprB acts both as a membrane-associated protein kinase that undergoes autophosphorylation and subsequently transfers the phosphate to MprA, and a protein phosphatase that dephosphorylates phospho-MprA. This Mycobacterium leprae (strain TN) protein is Signal transduction histidine-protein kinase/phosphatase MprB (mprB).